The primary structure comprises 197 residues: UPF0314 protein NGR_c32320 (197 aa).

Helical transmembrane passes span 16–36, 66–86, and 152–172; these read WIWL…QHLM, WYTP…YLLL, and LPVA…GWII.

Belongs to the UPF0314 family.

Its subcellular location is the cell membrane. The polypeptide is UPF0314 protein NGR_c32320 (Sinorhizobium fredii (strain NBRC 101917 / NGR234)).